The sequence spans 401 residues: MQLKALEVREITDYIKKMMDNDIILRNVRVKGEISNLKYHSTGIYFTLKDEIASLKCVMFNEYGKLLNFTLQDGMSVIVTGRISVYERNGTYQLYAQSIQSDGIGALYFAFNKLKEKLQKEGLFDSDKKKPIPKHPKKIAVVTSPTGAVIRDIITISRRRNPTVDILVVPVLVQGSSAADEICNAFRILNKREDIDVIILARGGGSLEEIWPFNEEKVARCIYASRIPVVSAVGHETDFTISDFVADLRAPTPSAAAEIVVPDIKVYQRELFLLKTKLLTLMTAELNRKKKEFEGLKRALYLNSPTKKSEILRHKVENLTASLYNEMLSIYQHKRNDFLILAEKLNSLSPLKVLTRGYTIVLDKQEKVISSVRDIKPYDEIKILFKDGKAKAIVQEVKENE.

Belongs to the XseA family. In terms of assembly, heterooligomer composed of large and small subunits.

It localises to the cytoplasm. It carries out the reaction Exonucleolytic cleavage in either 5'- to 3'- or 3'- to 5'-direction to yield nucleoside 5'-phosphates.. In terms of biological role, bidirectionally degrades single-stranded DNA into large acid-insoluble oligonucleotides, which are then degraded further into small acid-soluble oligonucleotides. In Thermoanaerobacter sp. (strain X514), this protein is Exodeoxyribonuclease 7 large subunit.